The primary structure comprises 151 residues: Large ribosomal subunit protein uL22 (151 aa).

This sequence belongs to the universal ribosomal protein uL22 family. In terms of assembly, part of the 50S ribosomal subunit.

Functionally, this protein binds specifically to 23S rRNA. It makes multiple contacts with different domains of the 23S rRNA in the assembled 50S subunit and ribosome. Its function is as follows. The globular domain of the protein is located near the polypeptide exit tunnel on the outside of the subunit, while an extended beta-hairpin is found that lines the wall of the exit tunnel in the center of the 70S ribosome. The sequence is that of Large ribosomal subunit protein uL22 from Thermofilum pendens (strain DSM 2475 / Hrk 5).